The chain runs to 550 residues: Probable importin subunit alpha-A (550 aa).

A compositionally biased stretch (basic and acidic residues) spans methionine 1 to asparagine 30. The segment at methionine 1–isoleucine 34 is disordered. The region spanning methionine 1–threonine 56 is the IBB domain. ARM repeat units follow at residues tyrosine 116–serine 155, asparagine 158–glycine 198, valine 201–leucine 241, lysine 256–aspartate 297, asparagine 300–threonine 339, serine 342–alanine 381, serine 385–asparagine 424, and threonine 428–lysine 467.

It belongs to the importin alpha family. As to quaternary structure, forms a complex with tnpo/importin subunit beta.

It is found in the cytoplasm. The protein localises to the nucleus envelope. Functionally, functions in nuclear protein import via a substrate-importin alpha-beta transport complex that passes though the nuclear pore complexes (NPC). Binds specifically and directly to substrates containing either a simple or bipartite NLS motif. In Dictyostelium discoideum (Social amoeba), this protein is Probable importin subunit alpha-A.